Reading from the N-terminus, the 282-residue chain is 2-dehydro-3-deoxyphosphooctonate aldolase (282 aa).

The protein belongs to the KdsA family.

The protein localises to the cytoplasm. The catalysed reaction is D-arabinose 5-phosphate + phosphoenolpyruvate + H2O = 3-deoxy-alpha-D-manno-2-octulosonate-8-phosphate + phosphate. It participates in carbohydrate biosynthesis; 3-deoxy-D-manno-octulosonate biosynthesis; 3-deoxy-D-manno-octulosonate from D-ribulose 5-phosphate: step 2/3. Its pathway is bacterial outer membrane biogenesis; lipopolysaccharide biosynthesis. The sequence is that of 2-dehydro-3-deoxyphosphooctonate aldolase from Shewanella sp. (strain MR-4).